The chain runs to 292 residues: Ribosomal protein L11 methyltransferase (292 aa).

Positions 143, 164, 186, and 228 each coordinate S-adenosyl-L-methionine.

Belongs to the methyltransferase superfamily. PrmA family.

The protein resides in the cytoplasm. The enzyme catalyses L-lysyl-[protein] + 3 S-adenosyl-L-methionine = N(6),N(6),N(6)-trimethyl-L-lysyl-[protein] + 3 S-adenosyl-L-homocysteine + 3 H(+). Its function is as follows. Methylates ribosomal protein L11. This Aeromonas salmonicida (strain A449) protein is Ribosomal protein L11 methyltransferase.